A 283-amino-acid polypeptide reads, in one-letter code: Ubiquinone biosynthesis protein COQ4, mitochondrial (283 aa).

A mitochondrion-targeting transit peptide spans 1–25 (MAIAKSVRARAVGLRSLRVLCAQRS). Positions 166, 167, 170, and 182 each coordinate Zn(2+).

Belongs to the COQ4 family. In terms of assembly, component of a multi-subunit COQ enzyme complex, composed of at least COQ3, COQ4, COQ5, COQ6, COQ7 and COQ9. Zn(2+) is required as a cofactor.

It is found in the mitochondrion inner membrane. It carries out the reaction a 4-hydroxy-3-methoxy-5-(all-trans-polyprenyl)benzoate + H(+) = a 2-methoxy-6-(all-trans-polyprenyl)phenol + CO2. The protein operates within cofactor biosynthesis; ubiquinone biosynthesis. In terms of biological role, lyase that catalyzes the C1-decarboxylation of 4-hydroxy-3-methoxy-5-(all-trans-polyprenyl)benzoic acid into 2-methoxy-6-(all-trans-polyprenyl)phenol during ubiquinone biosynthesis. The protein is Ubiquinone biosynthesis protein COQ4, mitochondrial of Coccidioides immitis (strain RS) (Valley fever fungus).